The sequence spans 570 residues: 2-isopropylmalate synthase (570 aa).

The Pyruvate carboxyltransferase domain occupies 31–305 (PIWMSTDLRD…DPELDFSHIN (275 aa)). The Mg(2+) site is built by aspartate 40, histidine 244, histidine 246, and asparagine 280. Residues 437–570 (SDGAIGYVSH…RRSSAQATVA (134 aa)) form a regulatory domain region.

This sequence belongs to the alpha-IPM synthase/homocitrate synthase family. LeuA type 2 subfamily. In terms of assembly, homodimer. It depends on Mg(2+) as a cofactor.

The protein localises to the cytoplasm. The catalysed reaction is 3-methyl-2-oxobutanoate + acetyl-CoA + H2O = (2S)-2-isopropylmalate + CoA + H(+). The protein operates within amino-acid biosynthesis; L-leucine biosynthesis; L-leucine from 3-methyl-2-oxobutanoate: step 1/4. In terms of biological role, catalyzes the condensation of the acetyl group of acetyl-CoA with 3-methyl-2-oxobutanoate (2-ketoisovalerate) to form 3-carboxy-3-hydroxy-4-methylpentanoate (2-isopropylmalate). This is 2-isopropylmalate synthase from Ralstonia pickettii (strain 12J).